A 378-amino-acid polypeptide reads, in one-letter code: Valine--tRNA ligase (378 aa).

The stretch at 307-377 (AGFINKEAEL…IQEQYKAIEA (71 aa)) forms a coiled coil.

The protein belongs to the class-I aminoacyl-tRNA synthetase family. ValS type 1 subfamily. As to quaternary structure, monomer.

It is found in the cytoplasm. It carries out the reaction tRNA(Val) + L-valine + ATP = L-valyl-tRNA(Val) + AMP + diphosphate. Functionally, catalyzes the attachment of valine to tRNA(Val). As ValRS can inadvertently accommodate and process structurally similar amino acids such as threonine, to avoid such errors, it has a 'posttransfer' editing activity that hydrolyzes mischarged Thr-tRNA(Val) in a tRNA-dependent manner. The chain is Valine--tRNA ligase (valS) from Haemophilus parainfluenzae.